A 485-amino-acid chain; its full sequence is NADH-quinone oxidoreductase subunit N (485 aa).

14 helical membrane passes run 8–28, 35–55, 71–91, 105–125, 127–147, 159–179, 203–223, 235–255, 271–291, 297–317, 326–346, 373–393, 408–430, and 455–475; these read LIALLPLLIVGLTVVVVMLSI, FLNATLSVIGLNAALVSLWFV, GFAMLYTGLVLLASLATCTFA, FYLLVLIAALGGILLANANHL, SLFLGIELISLPLFGLVGYAF, YTILSAAASSFLLFGMALVYA, LLAGFGLMIVGLGFKLSLVPF, PAPVSTFLATASKIAIFGVVM, VVLAIIAFASIIFGNLMALSQ, LLGYSSISHLGYLLVALIALQ, VGVYLVGYLFSSLGAFGVVSL, AAVMTVMMLSLAGIPMTLGFI, WWLVGAVVVGSAIGLYYYLRVAV, and IVVLISALLVLVLGVWPQPLI.

It belongs to the complex I subunit 2 family. NDH-1 is composed of 13 different subunits. Subunits NuoA, H, J, K, L, M, N constitute the membrane sector of the complex.

It is found in the cell inner membrane. The catalysed reaction is a quinone + NADH + 5 H(+)(in) = a quinol + NAD(+) + 4 H(+)(out). Functionally, NDH-1 shuttles electrons from NADH, via FMN and iron-sulfur (Fe-S) centers, to quinones in the respiratory chain. The immediate electron acceptor for the enzyme in this species is believed to be ubiquinone. Couples the redox reaction to proton translocation (for every two electrons transferred, four hydrogen ions are translocated across the cytoplasmic membrane), and thus conserves the redox energy in a proton gradient. The chain is NADH-quinone oxidoreductase subunit N from Escherichia coli O81 (strain ED1a).